We begin with the raw amino-acid sequence, 155 residues long: Large ribosomal subunit protein uL30 (155 aa).

It belongs to the universal ribosomal protein uL30 family. In terms of assembly, part of the 50S ribosomal subunit.

This Nitrosopumilus maritimus (strain SCM1) protein is Large ribosomal subunit protein uL30.